A 129-amino-acid polypeptide reads, in one-letter code: MAPKAEKKPASKAPAEKKPAAKKTASTDSKKRTKTRKETYSSYIYKVLKQTHPDTGISQKAMSIMNSFVNDIFERVASEASKLAAYNKKSTISAREIQTAVRLILPGELAKHAVSEATRTITKYSSAAN.

Residues 1-19 (MAPKAEKKPASKAPAEKKP) are compositionally biased toward basic and acidic residues. A disordered region spans residues 1–37 (MAPKAEKKPASKAPAEKKPAAKKTASTDSKKRTKTRK). 2 positions are modified to N6-acetyllysine; alternate: Lys-7 and Lys-8. Residues Lys-7 and Lys-8 each participate in a glycyl lysine isopeptide (Lys-Gly) (interchain with G-Cter in SUMO); alternate cross-link. Ser-11 bears the Phosphoserine mark. The residue at position 12 (Lys-12) is an N6-acetyllysine. Lys-17 is modified (N6-acetyllysine; alternate). A Glycyl lysine isopeptide (Lys-Gly) (interchain with G-Cter in SUMO); alternate cross-link involves residue Lys-17. Residue Lys-18 forms a Glycyl lysine isopeptide (Lys-Gly) (interchain with G-Cter in SUMO) linkage. Lys-123 is covalently cross-linked (Glycyl lysine isopeptide (Lys-Gly) (interchain with G-Cter in ubiquitin)).

The protein belongs to the histone H2B family. The nucleosome is a histone octamer containing two molecules each of H2A, H2B, H3 and H4 assembled in one H3-H4 heterotetramer and two H2A-H2B heterodimers. The octamer wraps approximately 147 bp of DNA. Monoubiquitinated by the UBC2-BRE1 complex to form H2BK123ub1. H2BK123ub1 gives a specific tag for epigenetic transcriptional activation and is also prerequisite for H3K4me and H3K79me formation. H2BK123ub1 also modulates the formation of double-strand breaks during meiosis and is a prerequisite for DNA-damage checkpoint activation. In terms of processing, phosphorylated by STE20 to form H2BS10ph during progression through meiotic prophase. May be correlated with chromosome condensation. Post-translationally, acetylated by GCN5 to form H2BK11ac and H2BK16ac. H2BK16ac can also be formed by ESA1. Acetylation of N-terminal lysines and particularly formation of H2BK11acK16ac has a positive effect on transcription. Sumoylation to form H2BK6su or H2BK7su, and probably also H2BK16su or H2BK17su, occurs preferentially near the telomeres and represses gene transcription.

The protein localises to the nucleus. The protein resides in the chromosome. Functionally, core component of nucleosome. Nucleosomes wrap and compact DNA into chromatin, limiting DNA accessibility to the cellular machineries which require DNA as a template. Histones thereby play a central role in transcription regulation, DNA repair, DNA replication and chromosomal stability. DNA accessibility is regulated via a complex set of post-translational modifications of histones, also called histone code, and nucleosome remodeling. The protein is Histone H2B.1 (HTB1) of Meyerozyma guilliermondii (strain ATCC 6260 / CBS 566 / DSM 6381 / JCM 1539 / NBRC 10279 / NRRL Y-324) (Yeast).